A 76-amino-acid polypeptide reads, in one-letter code: Large ribosomal subunit protein eL20 (76 aa).

Belongs to the eukaryotic ribosomal protein eL20 family. Part of the 50S ribosomal subunit. Binds 23S rRNA.

The chain is Large ribosomal subunit protein eL20 from Methanococcus maripaludis (strain DSM 14266 / JCM 13030 / NBRC 101832 / S2 / LL).